Consider the following 51-residue polypeptide: Ribosome biogenesis protein Nop10 (51 aa).

This sequence belongs to the NOP10 family.

Involved in ribosome biogenesis; more specifically in 18S rRNA pseudouridylation and in cleavage of pre-rRNA. The chain is Ribosome biogenesis protein Nop10 from Methanococcus maripaludis (strain C6 / ATCC BAA-1332).